Consider the following 116-residue polypeptide: Beta-2-microglobulin (116 aa).

The signal sequence occupies residues 1-19 (MRALITFALLCLLYITVQG). The 88-residue stretch at 24 to 111 (PKVHVYSHFP…RHMKETKKFS (88 aa)) folds into the Ig-like C1-type domain. A disulfide bridge connects residues cysteine 44 and cysteine 99.

This sequence belongs to the beta-2-microglobulin family. In terms of assembly, heterodimer of an alpha chain and a beta chain. Beta-2-microglobulin is the beta-chain of major histocompatibility complex class I molecules.

The protein localises to the secreted. In terms of biological role, component of the class I major histocompatibility complex (MHC). Involved in the presentation of peptide antigens to the immune system. This chain is Beta-2-microglobulin (b2m), found in Danio rerio (Zebrafish).